Reading from the N-terminus, the 66-residue chain is Large ribosomal subunit protein bL35 (66 aa).

The interval 20–40 (GKIKSTQSAKRHGMTKRSKRS) is disordered. Basic residues predominate over residues 28 to 40 (AKRHGMTKRSKRS).

This sequence belongs to the bacterial ribosomal protein bL35 family.

The polypeptide is Large ribosomal subunit protein bL35 (Ehrlichia chaffeensis (strain ATCC CRL-10679 / Arkansas)).